The primary structure comprises 132 residues: UPF0299 membrane protein CKO_00648 (132 aa).

4 helical membrane passes run 7–27 (IIWQ…AGIF), 31–51 (LLPI…VLLA), 63–83 (GCYV…VGVM), and 93–113 (FGPV…VVSW).

This sequence belongs to the UPF0299 family.

It localises to the cell inner membrane. The chain is UPF0299 membrane protein CKO_00648 from Citrobacter koseri (strain ATCC BAA-895 / CDC 4225-83 / SGSC4696).